A 103-amino-acid chain; its full sequence is uncharacterized protein (103 aa).

This is an uncharacterized protein from Haemophilus influenzae (strain ATCC 51907 / DSM 11121 / KW20 / Rd).